Reading from the N-terminus, the 113-residue chain is Hydrogenase maturation factor HypA 1 (113 aa).

Residue histidine 2 coordinates Ni(2+). 4 residues coordinate Zn(2+): cysteine 73, cysteine 76, cysteine 89, and cysteine 92.

Belongs to the HypA/HybF family.

In terms of biological role, involved in the maturation of [NiFe] hydrogenases. Required for nickel insertion into the metal center of the hydrogenase. The protein is Hydrogenase maturation factor HypA 1 of Bradyrhizobium diazoefficiens (strain JCM 10833 / BCRC 13528 / IAM 13628 / NBRC 14792 / USDA 110).